Reading from the N-terminus, the 212-residue chain is Riboflavin kinase (212 aa).

Positions 1 to 83 (MTELYCERKT…NLLRYFDIAS (83 aa)) are unknown. Residues 84-212 (IKLVGRVVTG…GDRVELEVYL (129 aa)) are riboflavin kinase. A CDP-binding site is contributed by 93–98 (GLGEGA). Positions 122 and 124 each coordinate Mg(2+). FMN-binding residues include T179 and E187. 192-195 (VRVR) provides a ligand contact to CDP.

The protein belongs to the archaeal riboflavin kinase family. It depends on Mg(2+) as a cofactor.

The catalysed reaction is riboflavin + CTP = CDP + FMN + H(+). The protein operates within cofactor biosynthesis; FMN biosynthesis; FMN from riboflavin (CTP route): step 1/1. Catalyzes the CTP-dependent phosphorylation of riboflavin (vitamin B2) to form flavin mononucleotide (FMN). The sequence is that of Riboflavin kinase (ribK) from Pyrobaculum calidifontis (strain DSM 21063 / JCM 11548 / VA1).